The sequence spans 172 residues: Shikimate kinase (172 aa).

Position 11 to 16 (11 to 16) interacts with ATP; sequence ASGKTE. Thr15 contacts Mg(2+). 3 residues coordinate substrate: Asp33, Arg57, and Gly80. Arg120 contributes to the ATP binding site. Arg142 is a substrate binding site.

It belongs to the shikimate kinase family. As to quaternary structure, monomer. The cofactor is Mg(2+).

The protein resides in the cytoplasm. It catalyses the reaction shikimate + ATP = 3-phosphoshikimate + ADP + H(+). It participates in metabolic intermediate biosynthesis; chorismate biosynthesis; chorismate from D-erythrose 4-phosphate and phosphoenolpyruvate: step 5/7. In terms of biological role, catalyzes the specific phosphorylation of the 3-hydroxyl group of shikimic acid using ATP as a cosubstrate. The sequence is that of Shikimate kinase from Flavobacterium psychrophilum (strain ATCC 49511 / DSM 21280 / CIP 103535 / JIP02/86).